The primary structure comprises 288 residues: MADFEVLGQTVGTNRFFVIGGPCVIENRDMTLRIAEFLRNACARLHIPCVFKSSYDKANRTSIHSYRGPGIEEGLAILSEVRREIGIPVLTDVHGVSEVAPAKEVVDILQVPAFLARQTDLVVAVGLTGKPVNLKKAQFLAPRDMSLVIEKVRGTGNDKILVTERGTQFGYNNLVVDMRSIPILSESGCPVVFDATHSVQLPGGQGTRSGGERRYVAALACAAVAAGAHGVFLEMHEDPDRALCDGPNSLPLEQVSPLLEKLLDIHRIVRDTYGAQDADIERKTGREH.

Belongs to the KdsA family.

It is found in the cytoplasm. It carries out the reaction D-arabinose 5-phosphate + phosphoenolpyruvate + H2O = 3-deoxy-alpha-D-manno-2-octulosonate-8-phosphate + phosphate. It functions in the pathway carbohydrate biosynthesis; 3-deoxy-D-manno-octulosonate biosynthesis; 3-deoxy-D-manno-octulosonate from D-ribulose 5-phosphate: step 2/3. The protein operates within bacterial outer membrane biogenesis; lipopolysaccharide biosynthesis. The polypeptide is 2-dehydro-3-deoxyphosphooctonate aldolase (Syntrophobacter fumaroxidans (strain DSM 10017 / MPOB)).